The chain runs to 96 residues: LCXIXQILTGLFLAMHYTSDIATAFSSVAHICRDVNYGWLIRNMHANGSSFFFICIYLHIGRGLYYGSYLYKETWNVGVILLLLVMMTAFVGYVLP.

Transmembrane regions (helical) follow at residues 1-15, 39-60, and 75-95; these read LCXI…FLAM, WLIR…YLHI, and WNVG…GYVL. Residues H45 and H59 each contribute to the heme b site.

Belongs to the cytochrome b family. In terms of assembly, the cytochrome bc1 complex contains 3 respiratory subunits (MT-CYB, CYC1 and UQCRFS1), 2 core proteins (UQCRC1 and UQCRC2) and probably 6 low-molecular weight proteins. The cofactor is heme b.

It is found in the mitochondrion inner membrane. Its function is as follows. Component of the ubiquinol-cytochrome c reductase complex (complex III or cytochrome b-c1 complex) that is part of the mitochondrial respiratory chain. The b-c1 complex mediates electron transfer from ubiquinol to cytochrome c. Contributes to the generation of a proton gradient across the mitochondrial membrane that is then used for ATP synthesis. The protein is Cytochrome b (mt-cyb) of Geophagus steindachneri (Red hump earth eater).